Reading from the N-terminus, the 353-residue chain is Fe(3+) ions import ATP-binding protein FbpC 1 (353 aa).

The 231-residue stretch at 9–239 (VVFRNICKQF…PASAFIADFM (231 aa)) folds into the ABC transporter domain. An ATP-binding site is contributed by 41–48 (GPSGCGKT).

The protein belongs to the ABC transporter superfamily. Fe(3+) ion importer (TC 3.A.1.10) family. In terms of assembly, the complex is composed of two ATP-binding proteins (FbpC), two transmembrane proteins (FbpB) and a solute-binding protein (FbpA).

The protein localises to the cell inner membrane. The enzyme catalyses Fe(3+)(out) + ATP + H2O = Fe(3+)(in) + ADP + phosphate + H(+). In terms of biological role, part of the ABC transporter complex FbpABC involved in Fe(3+) ions import. Responsible for energy coupling to the transport system. In Rhizobium meliloti (strain 1021) (Ensifer meliloti), this protein is Fe(3+) ions import ATP-binding protein FbpC 1.